The sequence spans 227 residues: Uracil-DNA glycosylase (227 aa).

The active-site Proton acceptor is Asp68.

Belongs to the uracil-DNA glycosylase (UDG) superfamily. UNG family.

The protein localises to the cytoplasm. It carries out the reaction Hydrolyzes single-stranded DNA or mismatched double-stranded DNA and polynucleotides, releasing free uracil.. Functionally, excises uracil residues from the DNA which can arise as a result of misincorporation of dUMP residues by DNA polymerase or due to deamination of cytosine. In Mycobacterium avium (strain 104), this protein is Uracil-DNA glycosylase.